A 256-amino-acid chain; its full sequence is Expansin-like B1 (256 aa).

A signal peptide spans Met1 to Ala24. Asn27 carries an N-linked (GlcNAc...) asparagine glycan. One can recognise an Expansin-like EG45 domain in the interval Asn46 to Lys150. One can recognise an Expansin-like CBD domain in the interval Asn164–Ser249. Residues Asn189 and Asn240 are each glycosylated (N-linked (GlcNAc...) asparagine).

Belongs to the expansin family. Expansin-like B subfamily.

Its subcellular location is the secreted. The polypeptide is Expansin-like B1 (EXLB1) (Oryza sativa subsp. japonica (Rice)).